The sequence spans 357 residues: UPF0324 membrane protein BMEI1914 (357 aa).

The next 11 membrane-spanning stretches (helical) occupy residues 29-48 (NILP…MVLE), 58-77 (AWLE…RSLA), 90-112 (SAKL…SAVI), 117-136 (GLIF…SYGI), 149-171 (LVAC…VIGA), 181-203 (AFTA…LLGL), 210-232 (ILAG…VSLL), 242-261 (LVRV…ISGN), 268-290 (PGFF…LHSL), 300-322 (AIQY…GVDI), and 334-356 (LTAI…MLGV).

Belongs to the UPF0324 family.

The protein localises to the cell membrane. The polypeptide is UPF0324 membrane protein BMEI1914 (Brucella melitensis biotype 1 (strain ATCC 23456 / CCUG 17765 / NCTC 10094 / 16M)).